The following is a 158-amino-acid chain: Glycine/sarcosine/betaine reductase complex component A (158 aa).

The active site involves Sec44. Residue Sec44 is a non-standard amino acid, selenocysteine.

This sequence belongs to the GrdA family. As to quaternary structure, monomer. Component of the glycine, sarcosine and betaine reductase complexes, together with components B and C.

The catalysed reaction is acetyl phosphate + [thioredoxin]-disulfide + NH4(+) + H2O = [thioredoxin]-dithiol + glycine + phosphate + H(+). It catalyses the reaction acetyl phosphate + methylamine + [thioredoxin]-disulfide + H2O = sarcosine + [thioredoxin]-dithiol + phosphate + H(+). It carries out the reaction acetyl phosphate + trimethylamine + [thioredoxin]-disulfide + H2O = glycine betaine + [thioredoxin]-dithiol + phosphate + H(+). Its function is as follows. In the first step of glycine, betaine and sarcosine reductases, the substrate is bound to component PB via a Schiff base intermediate. Then the PB-activated substrate is nucleophilically attacked by the selenol anion of component PA to transform it to a carboxymethylated selenoether and the respective amine. By action of component PC, acetyl phosphate is formed, leaving component PA in its oxidized state. Finally component PA becomes reduced by the thioredoxin system to start a new catalytic cycle of reductive deamination. The polypeptide is Glycine/sarcosine/betaine reductase complex component A (Clostridium botulinum (strain ATCC 19397 / Type A)).